Reading from the N-terminus, the 92-residue chain is YcgL domain-containing protein Shewana3_2381 (92 aa).

The YcgL domain maps to 1–85 (MLCAVYKSSR…PQVNLLAEHR (85 aa)).

This chain is YcgL domain-containing protein Shewana3_2381, found in Shewanella sp. (strain ANA-3).